The chain runs to 629 residues: tRNA uridine 5-carboxymethylaminomethyl modification enzyme MnmG (629 aa).

Residues 13 to 18 (GGGHAG), Val125, and Ser180 contribute to the FAD site. Residue 273–287 (GPRYCPSIEDKIHRF) coordinates NAD(+). Gln370 contacts FAD.

The protein belongs to the MnmG family. As to quaternary structure, homodimer. Heterotetramer of two MnmE and two MnmG subunits. It depends on FAD as a cofactor.

The protein resides in the cytoplasm. Its function is as follows. NAD-binding protein involved in the addition of a carboxymethylaminomethyl (cmnm) group at the wobble position (U34) of certain tRNAs, forming tRNA-cmnm(5)s(2)U34. The protein is tRNA uridine 5-carboxymethylaminomethyl modification enzyme MnmG of Shewanella oneidensis (strain ATCC 700550 / JCM 31522 / CIP 106686 / LMG 19005 / NCIMB 14063 / MR-1).